Consider the following 418-residue polypeptide: Protein YdhQ (418 aa).

This Escherichia coli (strain K12) protein is Protein YdhQ (ydhQ).